The sequence spans 394 residues: Protein TsgA homolog (394 aa).

12 helical membrane-spanning segments follow: residues 11-31 (WISY…GMVM), 51-71 (FLNA…EIIP), 76-96 (LMFG…GKSL), 101-121 (LCMF…TFLI), 134-154 (LLFT…VAAM), 162-182 (WYWV…LTLF), 206-226 (IGVL…LGFI), 251-271 (FWTS…FFDL), 274-294 (IVTI…STDN), 302-322 (IMAL…LGSL), 334-354 (FILT…GPIV), and 363-383 (LTTA…LGFV).

The protein belongs to the major facilitator superfamily. TsgA family.

The protein resides in the cell inner membrane. The polypeptide is Protein TsgA homolog (Serratia proteamaculans (strain 568)).